A 417-amino-acid chain; its full sequence is Tyrosine--tRNA ligase (417 aa).

Tyr39 is a binding site for L-tyrosine. A 'HIGH' region motif is present at residues 44–53 (PTAPSLHAGG). L-tyrosine-binding residues include Tyr176 and Gln180. A 'KMSKS' region motif is present at residues 236-240 (KMGKS). Residue Lys239 coordinates ATP. An S4 RNA-binding domain is found at 350–417 (IGVLALMVLA…KKRHVLIRPA (68 aa)).

The protein belongs to the class-I aminoacyl-tRNA synthetase family. TyrS type 1 subfamily. Homodimer.

It is found in the cytoplasm. It carries out the reaction tRNA(Tyr) + L-tyrosine + ATP = L-tyrosyl-tRNA(Tyr) + AMP + diphosphate + H(+). Catalyzes the attachment of tyrosine to tRNA(Tyr) in a two-step reaction: tyrosine is first activated by ATP to form Tyr-AMP and then transferred to the acceptor end of tRNA(Tyr). This is Tyrosine--tRNA ligase from Brucella abortus (strain 2308).